Consider the following 116-residue polypeptide: Large ribosomal subunit protein bL19 (116 aa).

The protein belongs to the bacterial ribosomal protein bL19 family.

Functionally, this protein is located at the 30S-50S ribosomal subunit interface and may play a role in the structure and function of the aminoacyl-tRNA binding site. The sequence is that of Large ribosomal subunit protein bL19 from Staphylococcus carnosus (strain TM300).